The sequence spans 416 residues: Gamma-glutamyl phosphate reductase (416 aa).

It belongs to the gamma-glutamyl phosphate reductase family.

The protein resides in the cytoplasm. It carries out the reaction L-glutamate 5-semialdehyde + phosphate + NADP(+) = L-glutamyl 5-phosphate + NADPH + H(+). Its pathway is amino-acid biosynthesis; L-proline biosynthesis; L-glutamate 5-semialdehyde from L-glutamate: step 2/2. Its function is as follows. Catalyzes the NADPH-dependent reduction of L-glutamate 5-phosphate into L-glutamate 5-semialdehyde and phosphate. The product spontaneously undergoes cyclization to form 1-pyrroline-5-carboxylate. This chain is Gamma-glutamyl phosphate reductase, found in Vibrio atlanticus (strain LGP32) (Vibrio splendidus (strain Mel32)).